Consider the following 37-residue polypeptide: U1-ectatotoxin-Eb1a subunit B (37 aa).

This sequence belongs to the ectatomin family. Ectatomin-Eq subfamily. In terms of assembly, heterodimer of subunits A and B; disulfide-linked. Expressed by the venom gland.

The protein localises to the secreted. The protein resides in the target cell membrane. In Ectatomma brunneum (Ant), this protein is U1-ectatotoxin-Eb1a subunit B.